We begin with the raw amino-acid sequence, 305 residues long: tRNA dimethylallyltransferase (305 aa).

G13–T20 is an ATP binding site. T15 to T20 contacts substrate. Residues D39–Q42 are interaction with substrate tRNA.

The protein belongs to the IPP transferase family. As to quaternary structure, monomer. It depends on Mg(2+) as a cofactor.

It catalyses the reaction adenosine(37) in tRNA + dimethylallyl diphosphate = N(6)-dimethylallyladenosine(37) in tRNA + diphosphate. Its function is as follows. Catalyzes the transfer of a dimethylallyl group onto the adenine at position 37 in tRNAs that read codons beginning with uridine, leading to the formation of N6-(dimethylallyl)adenosine (i(6)A). This Neorickettsia sennetsu (strain ATCC VR-367 / Miyayama) (Ehrlichia sennetsu) protein is tRNA dimethylallyltransferase.